A 415-amino-acid chain; its full sequence is Serine--tRNA ligase (415 aa).

Residue 231-233 (TAE) coordinates L-serine. 262–264 (RSE) is a binding site for ATP. Residue E285 participates in L-serine binding. Residue 349–352 (EISS) participates in ATP binding. Residue S383 participates in L-serine binding.

Belongs to the class-II aminoacyl-tRNA synthetase family. Type-1 seryl-tRNA synthetase subfamily. Homodimer. The tRNA molecule binds across the dimer.

It localises to the cytoplasm. The enzyme catalyses tRNA(Ser) + L-serine + ATP = L-seryl-tRNA(Ser) + AMP + diphosphate + H(+). It carries out the reaction tRNA(Sec) + L-serine + ATP = L-seryl-tRNA(Sec) + AMP + diphosphate + H(+). Its pathway is aminoacyl-tRNA biosynthesis; selenocysteinyl-tRNA(Sec) biosynthesis; L-seryl-tRNA(Sec) from L-serine and tRNA(Sec): step 1/1. In terms of biological role, catalyzes the attachment of serine to tRNA(Ser). Is also able to aminoacylate tRNA(Sec) with serine, to form the misacylated tRNA L-seryl-tRNA(Sec), which will be further converted into selenocysteinyl-tRNA(Sec). The polypeptide is Serine--tRNA ligase (Helicobacter pylori (strain ATCC 700392 / 26695) (Campylobacter pylori)).